A 405-amino-acid chain; its full sequence is S-adenosylmethionine synthase (405 aa).

141-146 contacts ATP; the sequence is GQGSVD.

Belongs to the AdoMet synthase 2 family. Mg(2+) is required as a cofactor.

The enzyme catalyses L-methionine + ATP + H2O = S-adenosyl-L-methionine + phosphate + diphosphate. It participates in amino-acid biosynthesis; S-adenosyl-L-methionine biosynthesis; S-adenosyl-L-methionine from L-methionine: step 1/1. In terms of biological role, catalyzes the formation of S-adenosylmethionine from methionine and ATP. This Methanococcus maripaludis (strain C7 / ATCC BAA-1331) protein is S-adenosylmethionine synthase.